The sequence spans 870 residues: DNA mismatch repair protein MutS (870 aa).

Position 629 to 636 (629 to 636) interacts with ATP; that stretch reads GPNMGGKS.

This sequence belongs to the DNA mismatch repair MutS family.

In terms of biological role, this protein is involved in the repair of mismatches in DNA. It is possible that it carries out the mismatch recognition step. This protein has a weak ATPase activity. The sequence is that of DNA mismatch repair protein MutS from Polaromonas naphthalenivorans (strain CJ2).